Here is a 521-residue protein sequence, read N- to C-terminus: Glucose-6-phosphate isomerase (521 aa).

Residue glutamate 327 is the Proton donor of the active site. Active-site residues include histidine 358 and lysine 486.

Belongs to the GPI family.

The protein resides in the cytoplasm. The catalysed reaction is alpha-D-glucose 6-phosphate = beta-D-fructose 6-phosphate. The protein operates within carbohydrate biosynthesis; gluconeogenesis. It participates in carbohydrate degradation; glycolysis; D-glyceraldehyde 3-phosphate and glycerone phosphate from D-glucose: step 2/4. Its function is as follows. Catalyzes the reversible isomerization of glucose-6-phosphate to fructose-6-phosphate. The polypeptide is Glucose-6-phosphate isomerase (Bordetella petrii (strain ATCC BAA-461 / DSM 12804 / CCUG 43448)).